A 266-amino-acid chain; its full sequence is Small ribosomal subunit protein uS3 (266 aa).

In terms of domain architecture, KH type-2 spans 39–107 (VREYLKKKLK…PVHVNIEEIR (69 aa)). A disordered region spans residues 214-266 (PVVEEVTEDKRPRRNARPGDRRPRRDGEGGAPGARRGGPRRGAGKPEDGKTGE). 2 stretches are compositionally biased toward basic and acidic residues: residues 230-241 (RPGDRRPRRDGE) and 257-266 (GKPEDGKTGE).

Belongs to the universal ribosomal protein uS3 family. As to quaternary structure, part of the 30S ribosomal subunit. Forms a tight complex with proteins S10 and S14.

Binds the lower part of the 30S subunit head. Binds mRNA in the 70S ribosome, positioning it for translation. This is Small ribosomal subunit protein uS3 from Burkholderia mallei (strain NCTC 10247).